Reading from the N-terminus, the 66-residue chain is U1-theraphotoxin-Cg1d 2 (66 aa).

Positions 1–21 (MKMSALFPIFGLPLLFCNSFA) are cleaved as a signal peptide. A propeptide spanning residues 22–29 (AELKATGR) is cleaved from the precursor. 3 disulfide bridges follow: cysteine 31/cysteine 46, cysteine 38/cysteine 51, and cysteine 45/cysteine 58. Proline 63 carries the post-translational modification Proline amide.

It belongs to the neurotoxin 10 (Hwtx-1) family. 46 (Jztx-7/10/12) subfamily. As to expression, expressed by the venom gland.

It localises to the secreted. In terms of biological role, probable ion channel inhibitor. This is U1-theraphotoxin-Cg1d 2 from Chilobrachys guangxiensis (Chinese earth tiger tarantula).